Reading from the N-terminus, the 1188-residue chain is Zinc finger SWIM domain-containing protein 5 (1188 aa).

Residues 1–10 (MAEGGEREEL) are compositionally biased toward basic and acidic residues. 2 disordered regions span residues 1–46 (MAEG…GAGG) and 123–171 (AGAA…TGTA). Composition is skewed to low complexity over residues 126-136 (AAGAAGASPVE) and 146-155 (AAPAGSAPGA). A compositionally biased stretch (gly residues) spans 156-171 (AGAGSSPGLGAGTGTA). The segment at 222–259 (YKVAISFDRCKITSVSCGCGNKDIFYCAHVVALSLYRI) adopts an SWIM-type zinc-finger fold.

This Mus musculus (Mouse) protein is Zinc finger SWIM domain-containing protein 5 (Zswim5).